The chain runs to 858 residues: DNA replication licensing factor mcm4-A (858 aa).

The segment at 1–125 is disordered; sequence MSSPTSTPSR…ARKVKQVDLH (125 aa). 2 stretches are compositionally biased toward polar residues: residues 54–68 and 79–94; these read SPSG…SSPA and LDLS…SSRV. The segment at 301 to 326 adopts a C4-type zinc-finger fold; the sequence is CQVCAFTTRVEIDRGRIAEPSVCKHC. Residues 453–662 form the MCM domain; that stretch reads IYERLAAALA…YDRRLAHHLV (210 aa). Tyrosine 466, arginine 492, lysine 511, serine 512, asparagine 613, arginine 638, arginine 727, and glutamate 730 together coordinate ATP. Positions 637 to 640 match the Arginine finger motif; sequence SRFD.

This sequence belongs to the MCM family. In terms of assembly, component of the mcm2-7 complex (RLF-M). The complex forms a toroidal hexameric ring with the proposed subunit order mcm2-mcm6-mcm4-mcm7-mcm3-mcm5. The heterodimer of mmcm3/mcm5 interacts with mcm4, mmcm6, mcm7 and weakly with mcm2. Component of the CMG helicase complex, composed of the mcm2-7 complex, the GINS complex and cdc45. In terms of processing, hyperphosphorylated during mitosis in a mechanism requiring cdc2-cyclin B and other kinases. Undergoes dephosphorylation after exiting mitosis, existing in a partially phosphorylated state in the cytosolic interphase mcm complex which associates with the pre-replication complexes (pre-Rcs). Complete dephosphorylation inactivates the mcm complex, preventing its binding to chromatin. Becomes actively phosphorylated during S phase once the mcm complex is assembled on the chromatin. This chromatin-associated phosphorylation occurs during the activation of the pre-Rcs and is independent of cdks. Phosphorylated by the cdc7-dbf4b complex.

It is found in the nucleus. It localises to the chromosome. The catalysed reaction is ATP + H2O = ADP + phosphate + H(+). In terms of biological role, acts as a component of the MCM2-7 complex (MCM complex) which is the replicative helicase essential for 'once per cell cycle' DNA replication initiation and elongation in eukaryotic cells. Core component of CDC45-MCM-GINS (CMG) helicase, the molecular machine that unwinds template DNA during replication, and around which the replisome is built. The active ATPase sites in the MCM2-7 ring are formed through the interaction surfaces of two neighboring subunits such that a critical structure of a conserved arginine finger motif is provided in trans relative to the ATP-binding site of the Walker A box of the adjacent subunit. The six ATPase active sites, however, are likely to contribute differentially to the complex helicase activity. This chain is DNA replication licensing factor mcm4-A (mcm4-a), found in Xenopus laevis (African clawed frog).